The primary structure comprises 380 residues: tRNA-specific 2-thiouridylase MnmA (380 aa).

ATP is bound by residues 12–19 and methionine 38; that span reads GLSGGVDS. The tract at residues 108 to 110 is interaction with target base in tRNA; it reads NPD. Catalysis depends on cysteine 113, which acts as the Nucleophile. A disulfide bond links cysteine 113 and cysteine 210. Glycine 138 is a binding site for ATP. Positions 160 to 162 are interaction with tRNA; the sequence is KDQ. Residue cysteine 210 is the Cysteine persulfide intermediate of the active site.

This sequence belongs to the MnmA/TRMU family.

It is found in the cytoplasm. The catalysed reaction is S-sulfanyl-L-cysteinyl-[protein] + uridine(34) in tRNA + AH2 + ATP = 2-thiouridine(34) in tRNA + L-cysteinyl-[protein] + A + AMP + diphosphate + H(+). Catalyzes the 2-thiolation of uridine at the wobble position (U34) of tRNA, leading to the formation of s(2)U34. This is tRNA-specific 2-thiouridylase MnmA from Ureaplasma urealyticum serovar 10 (strain ATCC 33699 / Western).